The sequence spans 504 residues: GTPase Der (504 aa).

Positions 4–168 constitute an EngA-type G 1 domain; it reads PVVALVGRPN…QVLAPFAEKM (165 aa). Residues 10–17, 57–61, and 120–123 contribute to the GTP site; these read GRPNVGKS, DTGGI, and NKTD. The segment covering 168-179 has biased composition (basic and acidic residues); the sequence is MENADENDRTSE. A disordered region spans residues 168 to 191; it reads MENADENDRTSEEEQDEWEQEFDF. Over residues 180-191 the composition is skewed to acidic residues; sequence EEQDEWEQEFDF. Residues 216–389 enclose the EngA-type G 2 domain; sequence IKIAIVGRPN…SIKEAYACAT (174 aa). Residues 222–229, 269–273, and 334–337 each bind GTP; these read GRPNVGKS, DTAGV, and NKWD. The 85-residue stretch at 390 to 474 folds into the KH-like domain; it reads QKMTTSLLTR…PIRLLFQEGS (85 aa).

This sequence belongs to the TRAFAC class TrmE-Era-EngA-EngB-Septin-like GTPase superfamily. EngA (Der) GTPase family. As to quaternary structure, associates with the 50S ribosomal subunit.

Functionally, GTPase that plays an essential role in the late steps of ribosome biogenesis. In Haemophilus influenzae (strain ATCC 51907 / DSM 11121 / KW20 / Rd), this protein is GTPase Der.